The following is a 400-amino-acid chain: Lipase member N (400 aa).

An N-terminal signal peptide occupies residues 1–19; that stretch reads MPMMWLFLTTACLIPGTLS. The AB hydrolase-1 domain maps to 81-381; the sequence is PVVYMQHALF…DWNHFDFVWG (301 aa). Ser175 acts as the Nucleophile in catalysis. An intrachain disulfide couples Cys249 to Cys258. An N-linked (GlcNAc...) asparagine glycan is attached at Asn274. Active-site charge relay system residues include Asp346 and His375.

The protein belongs to the AB hydrolase superfamily. Lipase family. In terms of tissue distribution, highly expressed in the epidermis. Also detected in other tissues, although at much lower levels, including liver and kidney.

The protein localises to the secreted. The enzyme catalyses a sterol ester + H2O = a sterol + a fatty acid + H(+). It catalyses the reaction a triacylglycerol + H2O = a 1,2-diacylglycerol + a fatty acid + H(+). It carries out the reaction a triacylglycerol + H2O = a diacylglycerol + a fatty acid + H(+). The catalysed reaction is a cholesterol ester + H2O = cholesterol + a fatty acid + H(+). Its function is as follows. Plays a highly specific role in the last step of keratinocyte differentiation. Contains two distinct domains: the alpha/beta hydrolase fold and the abhydrolase-associated lipase region, also features the consensus sequence of the active site of a genuine lipase. May have an essential function in lipid metabolism of the most differentiated epidermal layers. This Mus musculus (Mouse) protein is Lipase member N (Lipn).